The sequence spans 377 residues: Erythronate-4-phosphate dehydrogenase (377 aa).

Substrate-binding residues include Ser-59 and Thr-81. Position 162 (Asp-162) interacts with NAD(+). Arg-237 is a catalytic residue. Asp-260 provides a ligand contact to NAD(+). Glu-265 is an active-site residue. The active-site Proton donor is the His-282. NAD(+) is bound at residue Gly-285. Tyr-286 provides a ligand contact to substrate.

It belongs to the D-isomer specific 2-hydroxyacid dehydrogenase family. PdxB subfamily. In terms of assembly, homodimer.

It localises to the cytoplasm. The catalysed reaction is 4-phospho-D-erythronate + NAD(+) = (R)-3-hydroxy-2-oxo-4-phosphooxybutanoate + NADH + H(+). Its pathway is cofactor biosynthesis; pyridoxine 5'-phosphate biosynthesis; pyridoxine 5'-phosphate from D-erythrose 4-phosphate: step 2/5. Functionally, catalyzes the oxidation of erythronate-4-phosphate to 3-hydroxy-2-oxo-4-phosphonooxybutanoate. This chain is Erythronate-4-phosphate dehydrogenase, found in Psychrobacter arcticus (strain DSM 17307 / VKM B-2377 / 273-4).